The following is a 367-amino-acid chain: FAD synthetase 2, chloroplastic (367 aa).

A chloroplast-targeting transit peptide spans 1–57 (MLCGGSRVLQHLSDHNHHNSIGLGLGFCGAKIVQLSSFFLRPSQAMAKSHHFSRKLR).

It depends on Mg(2+) as a cofactor.

It is found in the plastid. Its subcellular location is the chloroplast. It carries out the reaction FMN + ATP + H(+) = FAD + diphosphate. The protein operates within cofactor biosynthesis; FAD biosynthesis; FAD from FMN: step 1/1. Functionally, catalyzes the adenylation of flavin mononucleotide (FMN) to form flavin adenine dinucleotide (FAD) coenzyme. This chain is FAD synthetase 2, chloroplastic, found in Arabidopsis thaliana (Mouse-ear cress).